The sequence spans 301 residues: Syntaxin-17 (301 aa).

Serine 2 carries the post-translational modification N-acetylserine. Over 2–227 (SEDEEKVKLR…KNLQKAAKYK (226 aa)) the chain is Cytoplasmic. Position 41 is an N6-acetyllysine (lysine 41). Residues 49-128 (DKLHEEHINA…QVKNEEALLQ (80 aa)) adopt a coiled-coil conformation. Tyrosine 156 is modified (phosphotyrosine; by ABL1). One can recognise a t-SNARE coiled-coil homology domain in the interval 161–223 (IPRDQNAAES…EEGTKNLQKA (63 aa)). A helical membrane pass occupies residues 228-248 (LAALPVAGAVIGGVVGGPIGL). Residues 228–274 (LAALPVAGAVIGGVVGGPIGLLAGFKVAGIAAALGGGVLGFTGGKLI) form a necessary and sufficient for localization to autophagosome region. Residues 249-253 (LAGFK) are Lumenal-facing. The chain crosses the membrane as a helical span at residues 254 to 274 (VAGIAAALGGGVLGFTGGKLI). The tract at residues 273 to 301 (LIQRRKQKMMEKLTSSCPDLPSQSDKKCS) is required for interaction with COPB1, TMED9 and TMED10. Over 275–301 (QRRKQKMMEKLTSSCPDLPSQSDKKCS) the chain is Cytoplasmic. Position 288 is a phosphoserine (serine 288). The Endoplasmic reticulum retention signal motif lies at 298–301 (KKCS).

Belongs to the syntaxin family. As to quaternary structure, forms a SNARE complex composed of VAMP8, SNAP29 and STX17 involved in fusion of autophagosome with lysosome. May interact with VAMP7. May interact with VTI1B. Probably interacts with BET1, SCFD1 and SEC22B. Interacts with PTPN2 and ABL1; involved in STX17 phosphorylation. Interacts with COPB1. Interacts with TMED9 and TMED10; the interaction is direct. Interacts with RUBCNL/PACER; promoting targeting of RUBCNL/PACER to autophagosome. Interacts with VAMP8, SNAP29, VPS39 and VPS41; these interactions are increased in the absence of TMEM39A. Interacts with IRGM; promoting STX17 recruitment to autophagosomes. Interacts with ATG8 proteins GABARAP and MAP1LC3B. Interacts with RNF115; this interaction enhances STX17 stability which in turn promotes autophagosome maturation. Interacts with RAB39A (GTP-bound); the interaction promotes autophagosome-lysosome membrane fusion driven by STX17-SNAP29-VAMP8. Interacts with RAB39B; the interaction may promote a different fonction in autophagy as compared with RAB39A. In terms of processing, phosphorylated at Tyr-156 probably by ABL1. Dephosphorylation by PTPN2; regulates exit from the endoplasmic reticulum. Detected in all tissues examined with higher expression in steroidogenic tissues including testis and adrenal gland (at protein level). Highly expressed in liver and testis. Also found in brain, heart, kidney, lung, placenta, skeletal muscle and spleen.

The protein resides in the endoplasmic reticulum membrane. The protein localises to the smooth endoplasmic reticulum membrane. It localises to the endoplasmic reticulum-Golgi intermediate compartment membrane. Its subcellular location is the cytoplasmic vesicle. It is found in the autophagosome membrane. The protein resides in the COPII-coated vesicle membrane. The protein localises to the cytoplasm. It localises to the cytosol. Its subcellular location is the mitochondrion membrane. It is found in the autolysosome membrane. In terms of biological role, SNAREs, soluble N-ethylmaleimide-sensitive factor-attachment protein receptors, are essential proteins for fusion of cellular membranes. SNAREs localized on opposing membranes assemble to form a trans-SNARE complex, an extended, parallel four alpha-helical bundle that drives membrane fusion. STX17 is a SNARE of the autophagosome involved in autophagy through the direct control of autophagosome membrane fusion with the lysosome membrane. May also play a role in the early secretory pathway where it may maintain the architecture of the endoplasmic reticulum-Golgi intermediate compartment/ERGIC and Golgi and/or regulate transport between the endoplasmic reticulum, the ERGIC and the Golgi. In Rattus norvegicus (Rat), this protein is Syntaxin-17.